The chain runs to 311 residues: Methionyl-tRNA formyltransferase (311 aa).

Ser117–Pro120 contributes to the (6S)-5,6,7,8-tetrahydrofolate binding site.

The protein belongs to the Fmt family.

The catalysed reaction is L-methionyl-tRNA(fMet) + (6R)-10-formyltetrahydrofolate = N-formyl-L-methionyl-tRNA(fMet) + (6S)-5,6,7,8-tetrahydrofolate + H(+). In terms of biological role, attaches a formyl group to the free amino group of methionyl-tRNA(fMet). The formyl group appears to play a dual role in the initiator identity of N-formylmethionyl-tRNA by promoting its recognition by IF2 and preventing the misappropriation of this tRNA by the elongation apparatus. This Bordetella avium (strain 197N) protein is Methionyl-tRNA formyltransferase.